A 140-amino-acid polypeptide reads, in one-letter code: Sex-regulated protein janus-B (140 aa).

Position 42 (Arg-42) interacts with substrate. His-69 serves as the catalytic Proton acceptor. Residue 110 to 112 participates in substrate binding; it reads CKT.

Belongs to the janus family.

In terms of biological role, janA and janB regulate somatic sex differentiation. The polypeptide is Sex-regulated protein janus-B (janB) (Drosophila pseudoobscura pseudoobscura (Fruit fly)).